The primary structure comprises 1028 residues: RNA cytidine acetyltransferase 1 (1028 aa).

Residues 286 to 295 (GRGKSAALGL) and Arg460 contribute to the ATP site. Residues 548-731 (VLLGPVDESK…FAPFYISQIP (184 aa)) enclose the N-acetyltransferase domain. Acetyl-CoA-binding positions include 619 to 621 (IAV), 626 to 632 (MKMGYGS), and Lys719. Residues 989-1028 (ISIESTKTDNKKEKPSGFDKSAKKRGNDKHSSTSNKKRRA) are disordered. The segment covering 994–1009 (TKTDNKKEKPSGFDKS) has biased composition (basic and acidic residues).

The protein belongs to the RNA cytidine acetyltransferase family. NAT10 subfamily.

It localises to the nucleus. It is found in the nucleolus. The catalysed reaction is a cytidine in 18S rRNA + acetyl-CoA + ATP + H2O = an N(4)-acetylcytidine in 18S rRNA + ADP + phosphate + CoA + H(+). It catalyses the reaction a cytidine in tRNA + acetyl-CoA + ATP + H2O = an N(4)-acetylcytidine in tRNA + ADP + phosphate + CoA + H(+). In terms of biological role, RNA cytidine acetyltransferase with specificity toward both 18S rRNA and tRNAs. Catalyzes the formation of N(4)-acetylcytidine (ac4C) in 18S rRNA. Required for early nucleolar cleavages of precursor rRNA at sites A0, A1 and A2 during 18S rRNA synthesis. Catalyzes the formation of ac4C in serine and leucine tRNAs. Requires a tRNA-binding adapter protein for full tRNA acetyltransferase activity but not for 18S rRNA acetylation. The sequence is that of RNA cytidine acetyltransferase 1 from Arabidopsis thaliana (Mouse-ear cress).